The chain runs to 4388 residues: Intermembrane lipid transfer protein VPS13D (4388 aa).

The Chorein N-terminal domain occupies 2–115 (LEGLVAWVLN…ERERKKALLQ (114 aa)). The residue at position 663 (Ser-663) is a Phosphoserine. The disordered stretch occupies residues 745 to 796 (QDNSRRKSRDGSASEETQFSDDEYKTPLATPPNTPPPESSSSNGEKTPPFSG). Residues 747–756 (NSRRKSRDGS) are compositionally biased toward basic and acidic residues. The segment covering 773–782 (ATPPNTPPPE) has biased composition (pro residues). A phosphoserine mark is found at Ser-1034, Ser-1038, Ser-1042, Ser-1138, and Ser-1341. Residues 1563–1582 (ASATSSPCPDSPLPPLSTCG) form a disordered region. Phosphoserine occurs at positions 1598, 1603, and 1699. 3 disordered regions span residues 1741 to 1771 (RPTS…VDEP), 2070 to 2108 (QDKE…QFTM), and 2122 to 2145 (FVPS…ESSS). Residue Thr-1761 is modified to Phosphothreonine. Phosphoserine is present on Ser-1765. Residues 2123 to 2144 (VPSTSTKQQGPQPTLSVGQESS) are compositionally biased toward polar residues. A phosphoserine mark is found at Ser-2435, Ser-2671, Ser-2861, Ser-2864, and Ser-2983. The region spanning 2633–2676 (TLDPVLELQLARLQELGFSMDDCRKALLACQGQLKKAASWLFKN) is the UBA domain. The SHR-BD domain maps to 3276–3558 (LKIFISAPYW…LDYAWDEPTL (283 aa)). Lys-3524 bears the N6-acetyllysine mark.

The protein belongs to the VPS13 family. Widely expressed.

Its function is as follows. Mediates the transfer of lipids between membranes at organelle contact sites. Functions in promoting mitochondrial clearance by mitochondrial autophagy (mitophagy), also possibly by positively regulating mitochondrial fission. Mitophagy plays an important role in regulating cell health and mitochondrial size and homeostasis. The chain is Intermembrane lipid transfer protein VPS13D from Homo sapiens (Human).